Consider the following 649-residue polypeptide: ATP-dependent zinc metalloprotease FtsH (649 aa).

The Cytoplasmic segment spans residues 1–18 (MQCSYPLARQLERSSALN). Residues 19 to 39 (NNLFQKAAIWLVIALVLFTVF) traverse the membrane as a helical segment. Residues 40-115 (KQFDKPRAQD…VTGKADDEPN (76 aa)) lie on the Periplasmic side of the membrane. Residues 116–136 (VLVQALYYLGPTLLIIVFWFY) traverse the membrane as a helical segment. Residues 137 to 649 (MMRQMQGGGK…PATARADETV (513 aa)) lie on the Cytoplasmic side of the membrane. 210–217 (GPPGTGKT) serves as a coordination point for ATP. Residue histidine 432 participates in Zn(2+) binding. Residue glutamate 433 is part of the active site. Positions 436 and 508 each coordinate Zn(2+). The disordered stretch occupies residues 606–649 (IMAGRPPRPPRGAQGPNSGGNTPPGGSPVAPTNAPATARADETV). Residues 616–626 (RGAQGPNSGGN) are compositionally biased toward low complexity.

This sequence in the central section; belongs to the AAA ATPase family. In the C-terminal section; belongs to the peptidase M41 family. Homohexamer. Zn(2+) is required as a cofactor.

The protein resides in the cell inner membrane. Functionally, acts as a processive, ATP-dependent zinc metallopeptidase for both cytoplasmic and membrane proteins. Plays a role in the quality control of integral membrane proteins. In Cupriavidus metallidurans (strain ATCC 43123 / DSM 2839 / NBRC 102507 / CH34) (Ralstonia metallidurans), this protein is ATP-dependent zinc metalloprotease FtsH.